The chain runs to 227 residues: Mitochondrial cardiolipin hydrolase (227 aa).

The Mitochondrial intermembrane portion of the chain corresponds to Met-1–Lys-14. The chain crosses the membrane as a helical span at residues Val-15 to Leu-33. At Thr-34–Lys-227 the chain is on the cytoplasmic side. A PLD phosphodiesterase domain is found at Ser-153 to Ala-180. Catalysis depends on residues His-158, Lys-160, and Asp-165.

This sequence belongs to the phospholipase D family. MitoPLD/Zucchini subfamily. In terms of assembly, homodimer.

The protein localises to the mitochondrion outer membrane. It carries out the reaction a cardiolipin + H2O = a 1,2-diacyl-sn-glycero-3-phospho-(1'-sn-glycerol) + a 1,2-diacyl-sn-glycero-3-phosphate + H(+). Its function is as follows. Presents phospholipase and nuclease activities, depending on the different physiological conditions. Plays a key role in mitochondrial fusion and fission via its phospholipase activity. In its phospholipase role, it uses the mitochondrial lipid cardiolipin as substrate to generate phosphatidate (PA or 1,2-diacyl-sn-glycero-3-phosphate), a second messenger signaling lipid. Production of PA facilitates Mitofusin-mediated fusion, whereas the cleavage of PA by the Lipin family of phosphatases produces diacylgycerol (DAG) which promotes mitochondrial fission. Regulates mitochondrial shape through facilitating mitochondrial fusion. During spermatogenesis, plays a critical role in PIWI-interacting RNA (piRNA) biogenesis. piRNAs provide essential protection against the activity of mobile genetic elements. piRNA-mediated transposon silencing is thus critical for maintaining genome stability, in particular in germline cells when transposons are mobilized as a consequence of wide-spread genomic demethylation. Has been shown to be a backbone-non-specific, single strand-specific nuclease, cleaving either RNA or DNA substrates with similar affinity. Produces 5' phosphate and 3' hydroxyl termini, suggesting it could directly participate in the processing of primary piRNA transcripts. Has been proposed to act as a cardiolipin hydrolase to generate phosphatidic acid at mitochondrial surface. Although it cannot be excluded that it can act as a phospholipase in some circumstances, this activity could not be confirmed. The protein is Mitochondrial cardiolipin hydrolase (pld6) of Danio rerio (Zebrafish).